The chain runs to 625 residues: Arginine--tRNA ligase (625 aa).

The 'HIGH' region signature appears at 128–138; the sequence is VNPTKPLHMGH.

This sequence belongs to the class-I aminoacyl-tRNA synthetase family.

The protein localises to the cytoplasm. It catalyses the reaction tRNA(Arg) + L-arginine + ATP = L-arginyl-tRNA(Arg) + AMP + diphosphate. This Pyrococcus abyssi (strain GE5 / Orsay) protein is Arginine--tRNA ligase (argS).